Here is a 128-residue protein sequence, read N- to C-terminus: Protein BEX1 (128 aa).

Residues Met-1 to Arg-55 are disordered. Basic and acidic residues predominate over residues Glu-14–Pro-35. Ser-105 is modified (phosphoserine; by PKB/AKT1). The tract at residues Ser-107–Pro-128 is disordered. Residues Pro-115 to Pro-128 show a composition bias toward basic and acidic residues. The interval His-117–His-121 is his cluster. Cys-125 is a Zn(2+) binding site.

It belongs to the BEX family. As to quaternary structure, interacts with neurotrophin receptor p75NTR/NGFR. Interacts with OMP. In terms of processing, phosphorylated. Phosphorylation of Ser-105 protects it from the proteasome. Post-translationally, ubiquitinated. Degraded by the proteasome. As to expression, expressed in the central nervous system. Expressed in Schwann cells from newborn sciatic nerve.

It localises to the nucleus. The protein resides in the cytoplasm. Signaling adapter molecule involved in p75NTR/NGFR signaling. Plays a role in cell cycle progression and neuronal differentiation. Inhibits neuronal differentiation in response to nerve growth factor (NGF). May act as a link between the cell cycle and neurotrophic factor signaling, possibly by functioning as an upstream modulator of receptor signaling, coordinating biological responses to external signals with internal cellular states. In absence of reductive stress, acts as a pseudosubstrate for the CRL2(FEM1B) complex: associates with FEM1B via zinc, thereby preventing association between FEM1B and its substrates. This is Protein BEX1 (Bex1) from Rattus norvegicus (Rat).